The following is a 1508-amino-acid chain: Pleiotropic ABC efflux transporter of multiple drugs CDR1 (1508 aa).

Residues 1 to 30 (MSEKPFVDAPPPEDGVAHQVSPHDNGSLSE) are disordered. The Cytoplasmic segment spans residues 1–524 (MSEKPFVDAP…NFLRMKGDPS (524 aa)). The ABC transporter 1 domain maps to 165 to 415 (DYWHDMRKID…FLDMGYECPQ (251 aa)). Residues 525–545 (IVIFSIFGQGVMGLILSSVFY) traverse the membrane as a helical segment. At 546–559 (NLQPTTGSFYYRGA) the chain is on the extracellular side. A helical transmembrane segment spans residues 560–580 (AMFFAVLFNAFASLLEIMSLF). Topologically, residues 581 to 608 (EARPIVEKHKKYALYRPSADALASIISE) are cytoplasmic. The chain crosses the membrane as a helical span at residues 609-629 (LPVKLCMSTCFNFSFYFMVHF). The Extracellular segment spans residues 630–633 (RRDP). The helical transmembrane segment at 634–654 (GRFFFYWLFCGLCTLCMSHMF) threads the bilayer. Residues 655 to 673 (RSLGAVSTSLAAAMTPATS) are Cytoplasmic-facing. Residues 674-694 (VLLAMVIFTGFVIPIPSMLGW) form a helical membrane-spanning segment. The Extracellular segment spans residues 695–775 (CRWIQYINPV…EYVNAHKWRN (81 aa)). A helical membrane pass occupies residues 776–796 (LGIVVAYIVVFLGVYIALTEF). At 797 to 1203 (NKGAMQKGEI…TFQQYWRSPG (407 aa)) the chain is on the cytoplasmic side. Residues 839-860 (KISYSDAMEKDSGESSTSDDKL) form a disordered region. The span at 845-860 (AMEKDSGESSTSDDKL) shows a compositional bias: basic and acidic residues. The 244-residue stretch at 867–1110 (FHWKDLTYQV…GLIDYFEKHG (244 aa)) folds into the ABC transporter 2 domain. 903–910 (GASGAGKT) serves as a coordination point for ATP. The chain crosses the membrane as a helical span at residues 1204 to 1224 (YIYSKFFLVITASLFNGFAFF). The Extracellular portion of the chain corresponds to 1225–1239 (HSGTSQQGLQNQMFS). Residues 1240–1260 (MFMFYMPLQTLIQQMLPYYVM) form a helical membrane-spanning segment. Over 1261 to 1288 (QREIYEVREAPSRTFSWFAFIASQITTE) the chain is Cytoplasmic. A helical transmembrane segment spans residues 1289-1309 (IPFQVVLGTVAFFCWYYPVGL). Over 1310–1326 (YQNATPTDTVHERGALM) the chain is Extracellular. A helical transmembrane segment spans residues 1327 to 1347 (WLLVTAFYVYTISLGQMVVAF). Over 1348-1362 (MEIADNAANMVNLMF) the chain is Cytoplasmic. Residues 1363 to 1383 (IMCLNFCGVLATPEALPGFWI) traverse the membrane as a helical segment. At 1384–1475 (FMYRCNPFTY…HAVYSERWRN (92 aa)) the chain is on the extracellular side. Residues 1476–1496 (FGIFIAFIAINMIGTIFFYWL) traverse the membrane as a helical segment. The Cytoplasmic segment spans residues 1497–1508 (ARVPKSSKSKNH).

The protein belongs to the ABC transporter superfamily.

It localises to the cell membrane. It catalyses the reaction fluconazole(in) + ATP + H2O = fluconazole(out) + ADP + phosphate + H(+). The enzyme catalyses itraconazole(in) + ATP + H2O = itraconazole(out) + ADP + phosphate + H(+). The catalysed reaction is voriconazole(in) + ATP + H2O = voriconazole(out) + ADP + phosphate + H(+). The bis-benzodioxolylindolinone azoffluxin acts as an inhibitor of the transporter activity. Clorgyline analogs M19 and M25 inhibit the transcporter activity by uncoupling CDR1 ATPase activity from the active transport of substrates. Activity is also inhibited by beauvericin and oligomycin. Pleiotropic ABC efflux transporter that confers resistance to numerous chemicals including itraconazole, fluconazole, voriconazole and posaconazole. In Candidozyma auris (Yeast), this protein is Pleiotropic ABC efflux transporter of multiple drugs CDR1.